The sequence spans 310 residues: tRNA uridine(34) hydroxylase (310 aa).

The Rhodanese domain maps to aspartate 134 to serine 232. The active-site Cysteine persulfide intermediate is the cysteine 192.

The protein belongs to the TrhO family.

The enzyme catalyses uridine(34) in tRNA + AH2 + O2 = 5-hydroxyuridine(34) in tRNA + A + H2O. In terms of biological role, catalyzes oxygen-dependent 5-hydroxyuridine (ho5U) modification at position 34 in tRNAs. This Prochlorococcus marinus (strain MIT 9303) protein is tRNA uridine(34) hydroxylase.